A 211-amino-acid chain; its full sequence is Protein-methionine-sulfoxide reductase heme-binding subunit MsrQ (211 aa).

5 helical membrane passes run W10–I30, L82–V102, P116–T136, F153–S173, and I178–F198.

This sequence belongs to the MsrQ family. In terms of assembly, heterodimer of a catalytic subunit (MsrP) and a heme-binding subunit (MsrQ). Requires FMN as cofactor. The cofactor is heme b.

The protein resides in the cell inner membrane. Its function is as follows. Part of the MsrPQ system that repairs oxidized periplasmic proteins containing methionine sulfoxide residues (Met-O), using respiratory chain electrons. Thus protects these proteins from oxidative-stress damage caused by reactive species of oxygen and chlorine generated by the host defense mechanisms. MsrPQ is essential for the maintenance of envelope integrity under bleach stress, rescuing a wide series of structurally unrelated periplasmic proteins from methionine oxidation, including the primary periplasmic chaperone SurA and the lipoprotein Pal. MsrQ provides electrons for reduction to the reductase catalytic subunit MsrP, using the quinone pool of the respiratory chain. This is Protein-methionine-sulfoxide reductase heme-binding subunit MsrQ from Escherichia coli (strain UTI89 / UPEC).